We begin with the raw amino-acid sequence, 241 residues long: Superoxide dismutase [Mn] 2, mitochondrial (241 aa).

Mn(2+)-binding residues include His60, His108, Asp197, and His201.

It belongs to the iron/manganese superoxide dismutase family. In terms of assembly, homotetramer. Requires Mn(2+) as cofactor.

The protein localises to the mitochondrion matrix. The enzyme catalyses 2 superoxide + 2 H(+) = H2O2 + O2. Destroys superoxide anion radicals which are normally produced within the cells and which are toxic to biological systems. The protein is Superoxide dismutase [Mn] 2, mitochondrial (MSD2) of Arabidopsis thaliana (Mouse-ear cress).